The primary structure comprises 505 residues: Lysine--tRNA ligase (505 aa).

Mg(2+) contacts are provided by Glu415 and Glu422.

The protein belongs to the class-II aminoacyl-tRNA synthetase family. In terms of assembly, homodimer. It depends on Mg(2+) as a cofactor.

It is found in the cytoplasm. The enzyme catalyses tRNA(Lys) + L-lysine + ATP = L-lysyl-tRNA(Lys) + AMP + diphosphate. In Salmonella typhi, this protein is Lysine--tRNA ligase.